A 286-amino-acid polypeptide reads, in one-letter code: Bifunctional protein FolD (286 aa).

NADP(+) contacts are provided by residues 166-168 (GRS), serine 191, and isoleucine 232.

This sequence belongs to the tetrahydrofolate dehydrogenase/cyclohydrolase family. In terms of assembly, homodimer.

The enzyme catalyses (6R)-5,10-methylene-5,6,7,8-tetrahydrofolate + NADP(+) = (6R)-5,10-methenyltetrahydrofolate + NADPH. The catalysed reaction is (6R)-5,10-methenyltetrahydrofolate + H2O = (6R)-10-formyltetrahydrofolate + H(+). It participates in one-carbon metabolism; tetrahydrofolate interconversion. Catalyzes the oxidation of 5,10-methylenetetrahydrofolate to 5,10-methenyltetrahydrofolate and then the hydrolysis of 5,10-methenyltetrahydrofolate to 10-formyltetrahydrofolate. This Herpetosiphon aurantiacus (strain ATCC 23779 / DSM 785 / 114-95) protein is Bifunctional protein FolD.